Consider the following 102-residue polypeptide: RNA-binding protein Hfq (102 aa).

One can recognise a Sm domain in the interval 9–68; sequence DPFLNALRRERVPVSIYLVNGIKLQGQIESFDQFVILLKNTVSQMVYKHAISTVVPSRPV. The disordered stretch occupies residues 63–102; that stretch reads VPSRPVSHHSNNAGGGSSNYHHGGSAQGSSAPQQDSDDAE. The span at 70–86 shows a compositional bias: low complexity; it reads HHSNNAGGGSSNYHHGG.

The protein belongs to the Hfq family. Homohexamer.

RNA chaperone that binds small regulatory RNA (sRNAs) and mRNAs to facilitate mRNA translational regulation in response to envelope stress, environmental stress and changes in metabolite concentrations. Also binds with high specificity to tRNAs. The sequence is that of RNA-binding protein Hfq from Klebsiella pneumoniae (strain 342).